We begin with the raw amino-acid sequence, 241 residues long: Aliphatic sulfonates import ATP-binding protein SsuB (241 aa).

The ABC transporter domain occupies 10–226; sequence VHLHGFSRSF…RPDHPAFMQL (217 aa). 42-49 provides a ligand contact to ATP; the sequence is GESGSGKT.

It belongs to the ABC transporter superfamily. Aliphatic sulfonates importer (TC 3.A.1.17.2) family. As to quaternary structure, the complex is composed of two ATP-binding proteins (SsuB), two transmembrane proteins (SsuC) and a solute-binding protein (SsuA).

It localises to the cell inner membrane. It catalyses the reaction ATP + H2O + aliphatic sulfonate-[sulfonate-binding protein]Side 1 = ADP + phosphate + aliphatic sulfonateSide 2 + [sulfonate-binding protein]Side 1.. Part of the ABC transporter complex SsuABC involved in aliphatic sulfonates import. Responsible for energy coupling to the transport system. The protein is Aliphatic sulfonates import ATP-binding protein SsuB of Delftia acidovorans (Pseudomonas acidovorans).